Reading from the N-terminus, the 1793-residue chain is Non-reducing polyketide synthase adaA (1793 aa).

The N-terminal acylcarrier protein transacylase domain (SAT) stretch occupies residues 16 to 250 (NDDLKALFRG…YSKSLALPVY (235 aa)). One can recognise a Ketosynthase family 3 (KS3) domain in the interval 388-821 (DSKLAIVGMA…GGNTTLVLED (434 aa)). Active-site for beta-ketoacyl synthase activity residues include C561, H696, and H739. Residues 923 to 1245 (VFTFTGQGAY…KSLCTLHLAG (323 aa)) form a malonyl-CoA:ACP transacylase (MAT) domain region. Positions 1312–1634 (TSLIHQVTEE…RLLMDRFFSP (323 aa)) are product template (PT) domain. Positions 1316–1452 (HQVTEETVDK…GSIKYPADPT (137 aa)) are N-terminal hotdog fold. Residues 1316-1629 (HQVTEETVDK…FRRVPRLLMD (314 aa)) enclose the PKS/mFAS DH domain. The active-site Proton acceptor; for dehydratase activity is H1348. Residues 1482-1629 (KASTLSKPLA…FRRVPRLLMD (148 aa)) are C-terminal hotdog fold. The Proton donor; for dehydratase activity role is filled by D1540. Residues 1642-1659 (AAPAPAPAAVPAVKKQPP) show a composition bias toward low complexity. The interval 1642-1714 (AAPAPAPAAV…TTEQEAPVAD (73 aa)) is disordered. The span at 1660–1681 (TETIQPQAPKTEQKQDQLQLPN) shows a compositional bias: polar residues. The span at 1683–1706 (ASAAPSTANSSSSPSSSGVATPTT) shows a compositional bias: low complexity. The Carrier domain maps to 1716-1793 (SAVTGVAGKC…DLTGWLEQYC (78 aa)). O-(pantetheine 4'-phosphoryl)serine is present on S1753.

Pantetheine 4'-phosphate serves as cofactor.

The enzyme catalyses holo-[ACP] + 9 malonyl-CoA + acetyl-CoA + 9 H(+) = 3-(2,4-dioxopentyl)-3,6,8,9-tetrahydroxy-1-oxo-1,2,3,4-tetrahydroanthracene-2-carboxyl-[ACP] + 9 CO2 + 10 CoA + 2 H2O. It participates in secondary metabolite biosynthesis. Its function is as follows. Non-reducing polyketide synthase; part of the gene cluster that mediates the biosynthesis of the linear tetracyclic TAN-1612 neuropeptide Y receptor antagonist. The decaketide backbone of TAN-1612 is synthesized by the non-reducing polyketide synthase adaA via condensation of one acetyl-CoA starter unit with 9 malonyl-CoA units. The FAD-dependent monooxygenase adaC then performs hydroxylation at C2 while the polaketide chain is still attached to the NRPKS adaA. The alpha-hydroxylation step at C2 appears to be crucial for the following C18-C1 Claisen cyclization and release of the C9-hydroxyl version of TAN-1612 from the NRPKS adaA, two steps performed by the lactamase-like protein adaB. Finally, the O-methyltransferase adaD performs the C9 O-methylation to complete the biosynthesis of TAN-1612. This is Non-reducing polyketide synthase adaA from Aspergillus niger (strain ATCC MYA-4892 / CBS 513.88 / FGSC A1513).